A 687-amino-acid polypeptide reads, in one-letter code: DNA ligase (687 aa).

NAD(+) contacts are provided by residues 34 to 38, 83 to 84, and glutamate 117; these read DAEYD and SL. Lysine 119 (N6-AMP-lysine intermediate) is an active-site residue. NAD(+) is bound by residues arginine 140, glutamate 182, lysine 298, and lysine 322. Residues cysteine 416, cysteine 419, cysteine 434, and cysteine 439 each contribute to the Zn(2+) site. In terms of domain architecture, BRCT spans 609-687; the sequence is EARGPFAGKT…EEEFVRLLKE (79 aa).

The protein belongs to the NAD-dependent DNA ligase family. LigA subfamily. The cofactor is Mg(2+). Mn(2+) serves as cofactor.

The enzyme catalyses NAD(+) + (deoxyribonucleotide)n-3'-hydroxyl + 5'-phospho-(deoxyribonucleotide)m = (deoxyribonucleotide)n+m + AMP + beta-nicotinamide D-nucleotide.. Its function is as follows. DNA ligase that catalyzes the formation of phosphodiester linkages between 5'-phosphoryl and 3'-hydroxyl groups in double-stranded DNA using NAD as a coenzyme and as the energy source for the reaction. It is essential for DNA replication and repair of damaged DNA. This is DNA ligase from Anaeromyxobacter dehalogenans (strain 2CP-1 / ATCC BAA-258).